The primary structure comprises 151 residues: Troponin C, isoallergen Bla g 6.0101 (151 aa).

4 EF-hand domains span residues 7–42 (EQIQ…LGHR), 43–78 (LDDD…FLVE), 83–118 (AMQQ…LDDK), and 119–151 (ITAE…MTGE). The Ca(2+) site is built by D56, D58, S60, E62, and E67. Ca(2+)-binding residues include D132, D134, S136, T138, and E143.

The protein belongs to the troponin C family.

Functionally, troponin is the central regulatory protein of striated muscle contraction. It consists of three components: Troponin-I (Tn-I) which is the inhibitor of actomyosin ATPase, Troponin-T (Tn-T) which contains the binding site for tropomyosin and Troponin-C (Tn-C). The binding of calcium to Tn-C abolishes the inhibitory action of Tn on actin filaments. This chain is Troponin C, isoallergen Bla g 6.0101, found in Blattella germanica (German cockroach).